A 687-amino-acid chain; its full sequence is Cytochrome b/c1 (687 aa).

A helical transmembrane segment spans residues 46 to 66 (FGAILSFMLGMQILTGVILAM). Heme b contacts are provided by His-96 and His-110. Helical transmembrane passes span 126-146 (VLWILGVIIYLLMMATGFMGY) and 160-180 (VITNLFSAIPYFGESIVTLLW). Heme b is bound by residues His-197 and His-211. Transmembrane regions (helical) follow at residues 199-219 (LLPFLIAGVVVLHVWALHVAG), 247-267 (FGVACFLLLYAWFIFYMPNYL), 305-325 (LAGVIGMFSAIIILCFLPWLD), 337-357 (LAKQFFWIFVAVCILLGYLGA), 363-383 (IYVIAGRVLTVCYFAYFLIVL), and 410-430 (AVASVAIALVAAGALFLGSLQ). Positions 404-434 (LAKGGKAVASVAIALVAAGALFLGSLQDARA) are internal signal sequence. A Cytochrome c domain is found at 458–643 (GALQRGLKVY…TVAQYSKDVT (186 aa)). Positions 471, 474, 475, and 616 each coordinate heme c. Residues 666-678 (VFLIIFAGLMYFT) form a helical membrane-spanning segment.

This sequence belongs to the cytochrome b family. In terms of assembly, the main subunits of complex b-c1 are: cytochrome b, cytochrome c1 and the Rieske protein. Heme b is required as a cofactor. Heme c serves as cofactor. Post-translationally, the protein is post-translationally processed into cytochrome b and c1. This occurs by processing between residues 434 and 435 without processing between cytochrome b and the N-terminal of the putative signal sequence domain.

It is found in the cell inner membrane. Component of the ubiquinol-cytochrome c reductase complex (complex III or cytochrome b-c1 complex), which is a respiratory chain that generates an electrochemical potential coupled to ATP synthesis. c1 functions as an electron donor to cytochrome c. This is Cytochrome b/c1 (fbcH) from Bradyrhizobium diazoefficiens (strain JCM 10833 / BCRC 13528 / IAM 13628 / NBRC 14792 / USDA 110).